The sequence spans 635 residues: 3-dehydroshikimate dehydratase (635 aa).

Residues E134, D165, Q191, and E239 each contribute to the a divalent metal cation site. VOC domains lie at 295-414 (GVEF…LVEQ) and 440-590 (RIDH…VYTE). Residues H443, H521, and E599 each coordinate Mg(2+).

Belongs to the bacterial two-domain DSD family. Homodimer. It depends on Co(2+) as a cofactor. Ni(2+) is required as a cofactor. Mg(2+) serves as cofactor. The cofactor is Mn(2+).

The catalysed reaction is 3-dehydroshikimate = 3,4-dihydroxybenzoate + H2O. The protein operates within aromatic compound metabolism; 3,4-dihydroxybenzoate biosynthesis. Its function is as follows. Catalyzes the conversion of 3-dehydroshikimate to protocatechuate (3,4-dihydroxybenzoate), a common intermediate of quinate and shikimate degradation pathways. The chain is 3-dehydroshikimate dehydratase from Pseudomonas putida (strain ATCC 47054 / DSM 6125 / CFBP 8728 / NCIMB 11950 / KT2440).